The sequence spans 226 residues: Transcription repressor OFP12 (226 aa).

Over residues 68 to 87 the composition is skewed to low complexity; sequence SSTFTASTSTAANSSSSSAS. The tract at residues 68-104 is disordered; sequence SSTFTASTSTAANSSSSSASYDDSDNYGFAPDDDSPP. The OVATE domain occupies 152-217; the sequence is VKHYVQSPDP…IRAFADILVS (66 aa).

In terms of assembly, interacts with KNAT1, KNAT2, KNAT3 and KNAT4. In terms of tissue distribution, expressed in roots, shoots, stems, flower buds and siliques.

It localises to the nucleus. Its function is as follows. Transcriptional repressor that regulates multiple aspects of plant growth and development through the regulation of BEL1-LIKE (BLH) and KNOX TALE (KNAT) homeodomain transcription factors. This is Transcription repressor OFP12 (OFP12) from Arabidopsis thaliana (Mouse-ear cress).